The following is a 360-amino-acid chain: Phospho-N-acetylmuramoyl-pentapeptide-transferase (360 aa).

Helical transmembrane passes span 26–46, 72–92, 94–114, 132–152, 168–188, 199–219, 236–256, 263–283, 288–308, and 338–358; these read AIVS…RMIA, PTMG…LWAY, SNPY…IGFV, WKYF…YLAG, VMPQ…VGTG, GLAI…AWAT, AGEL…FLWF, VFMG…IAVL, FLLV…ILQV, and VIVR…ATLK.

Belongs to the glycosyltransferase 4 family. MraY subfamily. Mg(2+) serves as cofactor.

It is found in the cell inner membrane. It catalyses the reaction UDP-N-acetyl-alpha-D-muramoyl-L-alanyl-gamma-D-glutamyl-meso-2,6-diaminopimeloyl-D-alanyl-D-alanine + di-trans,octa-cis-undecaprenyl phosphate = di-trans,octa-cis-undecaprenyl diphospho-N-acetyl-alpha-D-muramoyl-L-alanyl-D-glutamyl-meso-2,6-diaminopimeloyl-D-alanyl-D-alanine + UMP. It participates in cell wall biogenesis; peptidoglycan biosynthesis. Catalyzes the initial step of the lipid cycle reactions in the biosynthesis of the cell wall peptidoglycan: transfers peptidoglycan precursor phospho-MurNAc-pentapeptide from UDP-MurNAc-pentapeptide onto the lipid carrier undecaprenyl phosphate, yielding undecaprenyl-pyrophosphoryl-MurNAc-pentapeptide, known as lipid I. The chain is Phospho-N-acetylmuramoyl-pentapeptide-transferase from Klebsiella pneumoniae subsp. pneumoniae (strain ATCC 700721 / MGH 78578).